We begin with the raw amino-acid sequence, 891 residues long: Receptor-like protein 50 (891 aa).

Positions 1–22 (MITIIWSLCLIFCLSNSILVIA) are cleaved as a signal peptide. The Extracellular portion of the chain corresponds to 23-849 (KDLCLPDQRD…KEEKDKGLSW (827 aa)). N-linked (GlcNAc...) asparagine glycans are attached at residues asparagine 62 and asparagine 98. LRR repeat units follow at residues 105 to 130 (QHLQSLDLSYNDLSCTLPDSSGNFKY), 132 to 152 (RVLNLLGCNLFGEIPTSLRSL), 153 to 176 (SYLTDLDLSYNDDLTGEILDSMGN), 177 to 201 (LKHLRVLSLTSCKFTGKIPSSLGNL), 203 to 225 (YLTDLDLSWNYFTGELPDSMGNL), 226 to 249 (KSLRVLNLHRCNFFGKIPTSLGSL), and 250 to 272 (SNLTDLDISKNEFTSEGPDSMSS). Asparagine 200 carries an N-linked (GlcNAc...) asparagine glycan. 3 N-linked (GlcNAc...) asparagine glycosylation sites follow: asparagine 251, asparagine 285, and asparagine 306. LRR repeat units lie at residues 286–309 (LSSLTNVDLSSNQFKAMLPSNMSS), 310–334 (LSKLEAFDISGNSFSGTIPSSLFML), 336–358 (SLIKLDLGTNDFSGPLKIGNISS), and 359–383 (PSNLQELYIGENNINGPIPRSILKL). N-linked (GlcNAc...) asparagine glycosylation is present at asparagine 355. One copy of the LRR 12; degenerate repeat lies at 384–407 (VGLSALSLSFWDTGGIVDFSIFLQ). LRR repeat units follow at residues 408-436 (LKSLRSLDLSGINLNISSSHHLPSHMMHL), 438-453 (LSSCNISQFPKFLENQ), 454-477 (TSLYHLDISANQIEGQVPEWLWRL), 478-504 (PTLRYVNIAQNAFSGELTMLPNPIYSF), 506-519 (ASDNKFSGEIPRAV), 520-544 (CEIGTLVLSNNNFSGSIPPCFEISN), 545-568 (KTLSILHLRNNSLSGVIPEESLHG), 570-591 (LRSLDVGSNRLSGQFPKSLINC), 593-614 (YLQFLNVEENRINDTFPSWLKS), 615-641 (LPNLQLLVLRSNEFHGPIFSPGDSLSF), 642-665 (SKLRFFDISENRFSGVLPSDYFVG), 712-736 (FEIYKTIDVSGNRLEGDIPESIGIL), 737-760 (KELIVLNMSNNAFTGHIPPSLSNL), 761-784 (SNLQSLDLSQNRLSGSIPGELGEL), and 786-809 (FLARMNFSYNMLEGPIPQGTQIQS). N-linked (GlcNAc...) asparagine glycans are attached at residues asparagine 422, asparagine 442, and asparagine 452. 5 N-linked (GlcNAc...) asparagine glycosylation sites follow: asparagine 531, asparagine 544, asparagine 554, asparagine 590, and asparagine 605. N-linked (GlcNAc...) asparagine glycans are attached at residues asparagine 743 and asparagine 759. N-linked (GlcNAc...) asparagine glycans are attached at residues asparagine 791 and asparagine 811. A helical transmembrane segment spans residues 850–870 (VAAAIGYVPGLFCGLAIGHIL). At 871–891 (TSYKRDWFMRIFSCFSSPLKK) the chain is on the cytoplasmic side.

The protein belongs to the RLP family.

The protein resides in the cell membrane. This Arabidopsis thaliana (Mouse-ear cress) protein is Receptor-like protein 50.